A 327-amino-acid polypeptide reads, in one-letter code: Phosphate acyltransferase (327 aa).

The protein belongs to the PlsX family. Homodimer. Probably interacts with PlsY.

The protein localises to the cytoplasm. The enzyme catalyses a fatty acyl-[ACP] + phosphate = an acyl phosphate + holo-[ACP]. The protein operates within lipid metabolism; phospholipid metabolism. Catalyzes the reversible formation of acyl-phosphate (acyl-PO(4)) from acyl-[acyl-carrier-protein] (acyl-ACP). This enzyme utilizes acyl-ACP as fatty acyl donor, but not acyl-CoA. In Thermosipho africanus (strain TCF52B), this protein is Phosphate acyltransferase.